A 124-amino-acid polypeptide reads, in one-letter code: UPF0375 protein Y45F10C.4 (124 aa).

Positions 1–23 (MNFLPSTVLLLSFVVAIISGSFS) are cleaved as a signal peptide. N-linked (GlcNAc...) asparagine glycans are attached at residues Asn36 and Asn62.

Belongs to the UPF0375 family.

The protein resides in the secreted. This Caenorhabditis elegans protein is UPF0375 protein Y45F10C.4.